Here is a 750-residue protein sequence, read N- to C-terminus: Photosystem I P700 chlorophyll a apoprotein A1 (750 aa).

8 consecutive transmembrane segments (helical) span residues 70–93 (VFSAHFGQLAIIFIWLSGMYFHGA), 156–179 (LYCTAIGALIFAALMLFAGWFHYH), 195–219 (LNHHLAGLLGLGSLSWAGHQIHVSL), 291–309 (TAHHHLAIAVLFLIAGHMY), 346–369 (WHAQLAINLAMLGSLTIIVAHHMY), 385–411 (LSLFTHHMWIGGFIIVGAAAHAAIFMV), 433–455 (AIVSHLNWVCIFLGFHSFGLYIH), and 531–549 (FLVHHIHAFTIHVTVLILL). [4Fe-4S] cluster is bound by residues C573 and C582. The next 2 helical transmembrane spans lie at 589 to 610 (HVFLGLFWMYNAISVVIFHFSW) and 664 to 686 (LSAYGLLFLGAHFVWAFSLMFLF). H675 is a binding site for chlorophyll a'. 2 residues coordinate chlorophyll a: M683 and Y691. W692 lines the phylloquinone pocket. The chain crosses the membrane as a helical span at residues 724–744 (AVGVAHYLLGGIVTTWAFFLA).

It belongs to the PsaA/PsaB family. As to quaternary structure, the PsaA/B heterodimer binds the P700 chlorophyll special pair and subsequent electron acceptors. PSI consists of a core antenna complex that captures photons, and an electron transfer chain that converts photonic excitation into a charge separation. The eukaryotic PSI reaction center is composed of at least 11 subunits. P700 is a chlorophyll a/chlorophyll a' dimer, A0 is one or more chlorophyll a, A1 is one or both phylloquinones and FX is a shared 4Fe-4S iron-sulfur center. is required as a cofactor.

The protein localises to the plastid. It is found in the chloroplast thylakoid membrane. It catalyses the reaction reduced [plastocyanin] + hnu + oxidized [2Fe-2S]-[ferredoxin] = oxidized [plastocyanin] + reduced [2Fe-2S]-[ferredoxin]. PsaA and PsaB bind P700, the primary electron donor of photosystem I (PSI), as well as the electron acceptors A0, A1 and FX. PSI is a plastocyanin-ferredoxin oxidoreductase, converting photonic excitation into a charge separation, which transfers an electron from the donor P700 chlorophyll pair to the spectroscopically characterized acceptors A0, A1, FX, FA and FB in turn. Oxidized P700 is reduced on the lumenal side of the thylakoid membrane by plastocyanin. This Pinus koraiensis (Korean pine) protein is Photosystem I P700 chlorophyll a apoprotein A1.